The sequence spans 208 residues: Redox-sensing transcriptional repressor Rex 1 (208 aa).

Positions 15–54 (SYYMCLERLLDEGVEVVSSEELARRLDLKASQIRKDLSYF) form a DNA-binding region, H-T-H motif. An NAD(+)-binding site is contributed by 89–94 (GAGNIG).

This sequence belongs to the transcriptional regulatory Rex family. As to quaternary structure, homodimer.

The protein localises to the cytoplasm. Functionally, modulates transcription in response to changes in cellular NADH/NAD(+) redox state. This is Redox-sensing transcriptional repressor Rex 1 from Thermotoga maritima (strain ATCC 43589 / DSM 3109 / JCM 10099 / NBRC 100826 / MSB8).